The following is a 322-amino-acid chain: Acetyl-coenzyme A carboxylase carboxyl transferase subunit alpha (322 aa).

In terms of domain architecture, CoA carboxyltransferase C-terminal spans 43–297 (ALKSKSNALT…KEVLTQQLNK (255 aa)).

Belongs to the AccA family. Acetyl-CoA carboxylase is a heterohexamer composed of biotin carboxyl carrier protein (AccB), biotin carboxylase (AccC) and two subunits each of ACCase subunit alpha (AccA) and ACCase subunit beta (AccD).

The protein localises to the cytoplasm. The catalysed reaction is N(6)-carboxybiotinyl-L-lysyl-[protein] + acetyl-CoA = N(6)-biotinyl-L-lysyl-[protein] + malonyl-CoA. It participates in lipid metabolism; malonyl-CoA biosynthesis; malonyl-CoA from acetyl-CoA: step 1/1. Its function is as follows. Component of the acetyl coenzyme A carboxylase (ACC) complex. First, biotin carboxylase catalyzes the carboxylation of biotin on its carrier protein (BCCP) and then the CO(2) group is transferred by the carboxyltransferase to acetyl-CoA to form malonyl-CoA. This Vesicomyosocius okutanii subsp. Calyptogena okutanii (strain HA) protein is Acetyl-coenzyme A carboxylase carboxyl transferase subunit alpha.